Consider the following 318-residue polypeptide: ADP-L-glycero-D-manno-heptose-6-epimerase (318 aa).

Residues 10–11 (FI), 31–32 (DN), Lys-38, Lys-53, 76–80 (QGACS), and Asn-93 each bind NADP(+). Tyr-141 serves as the catalytic Proton acceptor. An NADP(+)-binding site is contributed by Lys-145. Residue Asn-172 participates in substrate binding. The NADP(+) site is built by Val-173 and Lys-181. Lys-181 acts as the Proton acceptor in catalysis. Residues Arg-183, His-190, 204-207 (FEGS), Arg-212, and Tyr-276 contribute to the substrate site.

This sequence belongs to the NAD(P)-dependent epimerase/dehydratase family. HldD subfamily. Homopentamer. It depends on NADP(+) as a cofactor.

The catalysed reaction is ADP-D-glycero-beta-D-manno-heptose = ADP-L-glycero-beta-D-manno-heptose. Its pathway is nucleotide-sugar biosynthesis; ADP-L-glycero-beta-D-manno-heptose biosynthesis; ADP-L-glycero-beta-D-manno-heptose from D-glycero-beta-D-manno-heptose 7-phosphate: step 4/4. Its function is as follows. Catalyzes the interconversion between ADP-D-glycero-beta-D-manno-heptose and ADP-L-glycero-beta-D-manno-heptose via an epimerization at carbon 6 of the heptose. The protein is ADP-L-glycero-D-manno-heptose-6-epimerase of Brachyspira hyodysenteriae (strain ATCC 49526 / WA1).